We begin with the raw amino-acid sequence, 414 residues long: Alanine--glyoxylate aminotransferase (414 aa).

A mitochondrion-targeting transit peptide spans 1–23 (MFRMLAKASVTLGSRAASWVRNM). Lys-231 is modified (N6-(pyridoxal phosphate)lysine). Lys-247 is modified (N6-acetyllysine; alternate). The residue at position 247 (Lys-247) is an N6-succinyllysine; alternate. An N6-acetyllysine mark is found at Lys-256 and Lys-334. Substrate is bound at residue Arg-382. Residues 412–414 (NKL) carry the Microbody targeting signal motif.

The protein belongs to the class-V pyridoxal-phosphate-dependent aminotransferase family. As to quaternary structure, homodimer. Requires pyridoxal 5'-phosphate as cofactor.

The protein resides in the peroxisome. It localises to the mitochondrion matrix. The enzyme catalyses L-serine + pyruvate = 3-hydroxypyruvate + L-alanine. It carries out the reaction glyoxylate + L-alanine = glycine + pyruvate. Functionally, catalyzes the transamination of glyoxylate to glycine and contributes to the glyoxylate detoxification. Its function is as follows. Catalyzes the transamination between L-serine and pyruvate and weakly contributes to gluconeogenesis from the L-serine metabolism. In Rattus norvegicus (Rat), this protein is Alanine--glyoxylate aminotransferase.